Consider the following 476-residue polypeptide: Adenosylhomocysteinase (476 aa).

Substrate-binding residues include threonine 61, aspartate 140, and glutamate 200. An NAD(+)-binding site is contributed by threonine 201 to threonine 203. Substrate is bound by residues lysine 230 and aspartate 234. NAD(+) contacts are provided by residues asparagine 235, glycine 264–glycine 269, glutamate 287, asparagine 322, isoleucine 343–histidine 345, and asparagine 389.

The protein belongs to the adenosylhomocysteinase family. NAD(+) serves as cofactor.

The protein resides in the cytoplasm. The enzyme catalyses S-adenosyl-L-homocysteine + H2O = L-homocysteine + adenosine. It functions in the pathway amino-acid biosynthesis; L-homocysteine biosynthesis; L-homocysteine from S-adenosyl-L-homocysteine: step 1/1. Its function is as follows. May play a key role in the regulation of the intracellular concentration of adenosylhomocysteine. In Acidovorax sp. (strain JS42), this protein is Adenosylhomocysteinase.